We begin with the raw amino-acid sequence, 856 residues long: Phospholipase D gamma 2 (856 aa).

A C2 domain is found at 21–161 (PLATSSGSLM…CSGNRIEGLF (141 aa)). D223 lines the Ca(2+) pocket. One can recognise a PLD phosphodiesterase 1 domain in the interval 362–397 (TIYTHHQKTMIVDAEAAQNRRKIVAFVGGLDLCNGR). Active-site residues include H367, K369, and D374. Position 367 (H367) interacts with a 1,2-diacyl-sn-glycero-3-phosphate. Residues H403 and H435 each coordinate Ca(2+). Q562 and H707 together coordinate a 1,2-diacyl-sn-glycero-3-phosphate. The PLD phosphodiesterase 2 domain maps to 702–729 (FMIYVHSKGMVVDDEFVLIGSANINQRS). Catalysis depends on residues H707, K709, and D714. E770 lines the Ca(2+) pocket.

Belongs to the phospholipase D family. C2-PLD subfamily. The cofactor is Ca(2+). Highly expressed in roots and flowers, moderately in stems, leaves and seedlings and low in siliques. Not detected in seeds.

The protein localises to the cytoplasm. It is found in the membrane. It carries out the reaction a 1,2-diacyl-sn-glycero-3-phosphocholine + H2O = a 1,2-diacyl-sn-glycero-3-phosphate + choline + H(+). With respect to regulation, inhibited by neomycin. Functionally, hydrolyzes glycerol-phospholipids at the terminal phosphodiesteric bond to generate phosphatidic acids (PA). Plays an important role in various cellular processes, including phytohormone action, vesicular trafficking, secretion, cytoskeletal arrangement, meiosis, tumor promotion, pathogenesis, membrane deterioration and senescence. Can use phosphatidylserine but prefers ethanolamine-containing lipids as substrates. Can use phosphatidylcholine (PC) as substrates in the presence of phosphatidylethanolamine (PE) and PIP2. Involved in membrane lipid modulation under aluminum (Al) stress and negatively modulate plant tolerance to Al. The sequence is that of Phospholipase D gamma 2 from Arabidopsis thaliana (Mouse-ear cress).